The following is a 195-amino-acid chain: Small ribosomal subunit protein uS4c (195 aa).

The S4 RNA-binding domain occupies 82 to 143; that stretch reads MRLDNILFRL…KQRSKALIQN (62 aa).

It belongs to the universal ribosomal protein uS4 family. Part of the 30S ribosomal subunit. Contacts protein S5. The interaction surface between S4 and S5 is involved in control of translational fidelity.

It is found in the plastid. The protein resides in the chloroplast. Its function is as follows. One of the primary rRNA binding proteins, it binds directly to 16S rRNA where it nucleates assembly of the body of the 30S subunit. Functionally, with S5 and S12 plays an important role in translational accuracy. The polypeptide is Small ribosomal subunit protein uS4c (rps4) (Gladiolus murielae (Abyssinian gladiolus)).